Reading from the N-terminus, the 88-residue chain is Transmembrane protein 069R (88 aa).

2 helical membrane passes run 30–50 (ALWP…VFTA) and 67–87 (VGVF…GDSF).

The protein resides in the host membrane. This Frog virus 3 (isolate Goorha) (FV-3) protein is Transmembrane protein 069R.